Reading from the N-terminus, the 152-residue chain is Small ribosomal subunit protein bS6 (152 aa).

Belongs to the bacterial ribosomal protein bS6 family.

Its function is as follows. Binds together with bS18 to 16S ribosomal RNA. This Bdellovibrio bacteriovorus (strain ATCC 15356 / DSM 50701 / NCIMB 9529 / HD100) protein is Small ribosomal subunit protein bS6.